A 35-amino-acid chain; its full sequence is Photosystem II reaction center protein M (35 aa).

Residues 7–27 (GFIASILFVLVPTVFLLILFI) form a helical membrane-spanning segment.

It belongs to the PsbM family. As to quaternary structure, PSII is composed of 1 copy each of membrane proteins PsbA, PsbB, PsbC, PsbD, PsbE, PsbF, PsbH, PsbI, PsbJ, PsbK, PsbL, PsbM, PsbT, PsbX, PsbY, PsbZ, Psb30/Ycf12, peripheral proteins PsbO, CyanoQ (PsbQ), PsbU, PsbV and a large number of cofactors. It forms dimeric complexes.

The protein localises to the cellular thylakoid membrane. In terms of biological role, one of the components of the core complex of photosystem II (PSII). PSII is a light-driven water:plastoquinone oxidoreductase that uses light energy to abstract electrons from H(2)O, generating O(2) and a proton gradient subsequently used for ATP formation. It consists of a core antenna complex that captures photons, and an electron transfer chain that converts photonic excitation into a charge separation. This subunit is found at the monomer-monomer interface. This Microcystis aeruginosa (strain NIES-843 / IAM M-2473) protein is Photosystem II reaction center protein M.